Reading from the N-terminus, the 468-residue chain is Hepatocyte nuclear factor 3-alpha (468 aa).

The fork-head DNA-binding region spans 169 to 260 (AKPPYSYISL…GNMFENGCYL (92 aa)). An essential for DNA binding region spans residues 251–288 (GNMFENGCYLRRQKRFKCEKQPGAGGGSGGGGSKGGPE). Residues 269–396 (EKQPGAGGGS…DPHYSFNHPF (128 aa)) are disordered. Gly residues predominate over residues 273–285 (GAGGGSGGGGSKG). Phosphoserine is present on residues Ser-303 and Ser-327. 2 stretches are compositionally biased toward low complexity: residues 318–328 (GAPAPGPAASP) and 347–365 (SPAS…ALAS).

In terms of assembly, binds DNA as a monomer. Interacts with FOXA2. Interacts with NKX2-1. Interacts with HDAC7. Interacts with the histone H3-H4 heterodimer. Associates with nucleosomes containing histone H2A. Interacts with AR. Interacts with NR0B2. Restricted mainly to endoderm-derived tissues (lung, liver, stomach, and small intestine). Expressed in the prostate.

It is found in the nucleus. Its function is as follows. Transcription factor that is involved in embryonic development, establishment of tissue-specific gene expression and regulation of gene expression in differentiated tissues. Is thought to act as a 'pioneer' factor opening the compacted chromatin for other proteins through interactions with nucleosomal core histones and thereby replacing linker histones at target enhancer and/or promoter sites. Binds DNA with the consensus sequence 5'-[AC]A[AT]T[AG]TT[GT][AG][CT]T[CT]-3'. Proposed to play a role in translating the epigenetic signatures into cell type-specific enhancer-driven transcriptional programs. Involved in the development of multiple endoderm-derived organ systems such as the liver, pancreas, lungs and prostate; FOXA1 and FOXA2 seem to have at least in part redundant roles. Plays a role in prostate morphogenesis and epithelial cell differentiation. FOXA1 and FOXA2 are essential for hepatic specification. FOXA1 and FOXA2 are required for morphogenesis and cell differentiation during formation of the lung. FOXA1 and FOXA2 are involved in bile duct formation; they positively regulate the binding of glucocorticoid receptor/NR3C1 to the IL6 promoter. FOXA1 and FOXA2 regulate multiple phases of midbrain dopaminergic neuron development; they regulate expression of NEUROG2 at the beginning of mDA neurogenesis and of NR4A2 and EN1 in immature mDA neurons. Modulates the transcriptional activity of nuclear hormone receptors. Is involved in ESR1-mediated transcription. Inhibits NKX2-1-mediated transcription from the SFTPC promoter in lung epithel independently from DNA-binding. Involved in regulation of apoptosis. Involved in cell cycle regulation. Originally described as a transcription activator for a number of liver genes such as AFP, albumin, tyrosine aminotransferase, PEPCK, etc. Interacts with the cis-acting regulatory regions of these genes. Involved in glucose homeostasis; activates the GCG promoter. This chain is Hepatocyte nuclear factor 3-alpha (Foxa1), found in Mus musculus (Mouse).